The chain runs to 120 residues: UPF0102 protein PTH_1707 (120 aa).

The protein belongs to the UPF0102 family.

This is UPF0102 protein PTH_1707 from Pelotomaculum thermopropionicum (strain DSM 13744 / JCM 10971 / SI).